We begin with the raw amino-acid sequence, 405 residues long: L-carnitine CoA-transferase (405 aa).

2 residues coordinate CoA: K97 and R104. Catalysis depends on D169, which acts as the Nucleophile.

Belongs to the CoA-transferase III family. CaiB subfamily. In terms of assembly, homodimer.

The protein localises to the cytoplasm. The enzyme catalyses crotonobetainyl-CoA + (R)-carnitine = crotonobetaine + (R)-carnitinyl-CoA. It catalyses the reaction 4-(trimethylamino)butanoyl-CoA + (R)-carnitine = (R)-carnitinyl-CoA + 4-(trimethylamino)butanoate. It participates in amine and polyamine metabolism; carnitine metabolism. Functionally, catalyzes the reversible transfer of the CoA moiety from gamma-butyrobetainyl-CoA to L-carnitine to generate L-carnitinyl-CoA and gamma-butyrobetaine. Is also able to catalyze the reversible transfer of the CoA moiety from gamma-butyrobetainyl-CoA or L-carnitinyl-CoA to crotonobetaine to generate crotonobetainyl-CoA. The chain is L-carnitine CoA-transferase from Escherichia coli (strain 55989 / EAEC).